The following is a 251-amino-acid chain: CDP-diacylglycerol pyrophosphatase (251 aa).

Residues 4-24 traverse the membrane as a helical segment; it reads AGLLFLVMIVIAVVAAGIGYW.

The protein belongs to the Cdh family.

Its subcellular location is the cell inner membrane. It carries out the reaction a CDP-1,2-diacyl-sn-glycerol + H2O = a 1,2-diacyl-sn-glycero-3-phosphate + CMP + 2 H(+). Its pathway is phospholipid metabolism; CDP-diacylglycerol degradation; phosphatidate from CDP-diacylglycerol: step 1/1. This Shigella boydii serotype 4 (strain Sb227) protein is CDP-diacylglycerol pyrophosphatase.